The chain runs to 257 residues: 5'-nucleotidase SurE (257 aa).

A divalent metal cation-binding residues include D9, D10, S42, and N96.

This sequence belongs to the SurE nucleotidase family. A divalent metal cation serves as cofactor.

The protein localises to the cytoplasm. It catalyses the reaction a ribonucleoside 5'-phosphate + H2O = a ribonucleoside + phosphate. In terms of biological role, nucleotidase that shows phosphatase activity on nucleoside 5'-monophosphates. This Campylobacter lari (strain RM2100 / D67 / ATCC BAA-1060) protein is 5'-nucleotidase SurE.